The following is a 568-amino-acid chain: Phosphoprotein (568 aa).

The segment at Met-1–Glu-23 is disordered. Over residues Ile-7–Gly-20 the composition is skewed to basic and acidic residues. The N0 binding stretch occupies residues Asp-33–Thr-41. Positions Ile-54 to Gly-317 are disordered. Basic and acidic residues-rich tracts occupy residues Ala-99–Asn-110, Gly-150–Asp-168, and Glu-175–Asn-193. Ser-249, Ser-257, and Ser-260 each carry phosphoserine; by host. Positions Phe-344–Ser-411 are multimerization. Positions Tyr-364–His-429 form a coiled coil. The interval Glu-412–Thr-445 is l protein binding. The interval Asp-433–Thr-462 is disordered. Residues Ser-447 and Ser-449 each carry the phosphoserine; by host modification. Over residues Lys-453–Thr-462 the composition is skewed to basic and acidic residues. Positions Asp-479–Asn-568 are interaction with the nucleocapsid (N-RNA).

Belongs to the respirovirus P protein family. As to quaternary structure, homotetramer. Interacts (via multimerization domain) with polymerase L; this interaction forms the polymerase complex. Interacts (via N-terminus) with N0; this interaction allows P to chaperon N0 before encapsidation and form the N-P complex. Interacts (via C-terminus) with N-RNA template; this interaction positions the polymerase on the template. Phosphorylated by PKC/PRKCZ, and other unknown kinases. Phosphorylation is necessary for viral transcription and replication. The N-terminus contains the majority of phosphorylated sites. Ser-249 is the major site of phosphorylation, but is not necessary for most functions.

It is found in the host cytoplasm. Its function is as follows. Essential cofactor of the RNA polymerase L that plays a central role in the transcription and replication by forming the polymerase complex with RNA polymerase L and recruiting L to the genomic N-RNA template for RNA synthesis. Also plays a central role in the encapsidation of nascent RNA chains by forming the encapsidation complex with the nucleocapsid protein N (N-P complex). Acts as a chaperone for newly synthesized free N protein, so-called N0, allowing encapsidation of nascent RNA chains during replication. The nucleoprotein protein N prevents excessive phosphorylation of P, which leads to down-regulation of viral transcription/ replication. Participates, together with N, in the formation of viral factories (viroplasms), which are large inclusions in the host cytoplasm where replication takes place. Recruits host PI4KB and remodel the host endoplasmic reticulum membrane to form viral replication factories. This chain is Phosphoprotein (P/V/C), found in Sendai virus (strain Ohita) (SeV).